Reading from the N-terminus, the 1628-residue chain is THO complex subunit 2 (1628 aa).

Basic and acidic residues-rich tracts occupy residues 1-10 (MTSLPEKDQQ) and 1360-1399 (TDNK…EGNR). 2 disordered regions span residues 1–21 (MTSL…NQKK) and 1337–1628 (VALN…RKIQ). Thr-1406 and Thr-1408 each carry phosphothreonine. The span at 1411 to 1429 (DIQRSDSKLREDQSRDRTP) shows a compositional bias: basic and acidic residues. Positions 1430–1444 (QSRSFTNENNDNLRS) are enriched in polar residues. Residues 1461-1474 (ARREHESQKSDRWR) are compositionally biased toward basic and acidic residues. Low complexity predominate over residues 1476 to 1493 (NGNVNRNPRVSNNNSTNV). Over residues 1494–1526 (SRERSSEANHRTSNDNKRDEVTEGKDKNKRQDI) the composition is skewed to basic and acidic residues. The span at 1527–1550 (SGESNSRQNNAISRAGRSNGSNRG) shows a compositional bias: polar residues. Basic and acidic residues predominate over residues 1551–1560 (NDSRDADGRR). Residue Ser-1577 is modified to Phosphoserine. Positions 1581–1628 (LREEDERENSRRRARQDDRRDRDSRQQRDRPRDRTSRSAREEKRRKIQ) are enriched in basic and acidic residues.

The protein belongs to the THOC2 family. As to quaternary structure, component of the THO complex. THO associates with DNA and RNA in vitro.

The protein resides in the nucleus. Its function is as follows. Component the THO subcomplex of the TREX complex, which operates in coupling transcription elongation to mRNA export. The THO complex is recruited to transcribed genes and moves along the gene with the elongating polymerase during transcription. THO is important for stabilizing nascent RNA in the RNA polymerase II elongation complex by preventing formation of DNA:RNA hybrids behind the elongating polymerase. The polypeptide is THO complex subunit 2 (tho2) (Schizosaccharomyces pombe (strain 972 / ATCC 24843) (Fission yeast)).